The primary structure comprises 371 residues: Putative RING finger protein ORF117 (371 aa).

The RING-type zinc-finger motif lies at 72–108 (CCICFRKDVIYKEVPCGHYICVECYKEPIRNVCPECN). A compositionally biased stretch (acidic residues) spans 178-192 (EEEMNESEAEEEEPV). Residues 178–218 (EEEMNESEAEEEEPVPEIAQFEALNTPPPPPTNRRPKIRRP) form a disordered region.

The chain is Putative RING finger protein ORF117 from Magallana gigas (Pacific oyster).